A 205-amino-acid polypeptide reads, in one-letter code: Glycerol-3-phosphate acyltransferase (205 aa).

The next 5 membrane-spanning stretches (helical) occupy residues 6–26 (STVL…AVVV), 55–75 (KAAI…VWLV), 89–109 (VALV…FRFV), 120–140 (ILLA…LVIA), and 162–182 (ALMF…VLLI).

This sequence belongs to the PlsY family. In terms of assembly, probably interacts with PlsX.

Its subcellular location is the cell inner membrane. The catalysed reaction is an acyl phosphate + sn-glycerol 3-phosphate = a 1-acyl-sn-glycero-3-phosphate + phosphate. Its pathway is lipid metabolism; phospholipid metabolism. Its function is as follows. Catalyzes the transfer of an acyl group from acyl-phosphate (acyl-PO(4)) to glycerol-3-phosphate (G3P) to form lysophosphatidic acid (LPA). This enzyme utilizes acyl-phosphate as fatty acyl donor, but not acyl-CoA or acyl-ACP. The protein is Glycerol-3-phosphate acyltransferase of Herminiimonas arsenicoxydans.